The following is a 279-amino-acid chain: Putative pyruvate, phosphate dikinase regulatory protein (279 aa).

153–160 (GVSRTSKT) is an ADP binding site.

It belongs to the pyruvate, phosphate/water dikinase regulatory protein family. PDRP subfamily.

It catalyses the reaction N(tele)-phospho-L-histidyl/L-threonyl-[pyruvate, phosphate dikinase] + ADP = N(tele)-phospho-L-histidyl/O-phospho-L-threonyl-[pyruvate, phosphate dikinase] + AMP + H(+). The catalysed reaction is N(tele)-phospho-L-histidyl/O-phospho-L-threonyl-[pyruvate, phosphate dikinase] + phosphate + H(+) = N(tele)-phospho-L-histidyl/L-threonyl-[pyruvate, phosphate dikinase] + diphosphate. Functionally, bifunctional serine/threonine kinase and phosphorylase involved in the regulation of the pyruvate, phosphate dikinase (PPDK) by catalyzing its phosphorylation/dephosphorylation. This chain is Putative pyruvate, phosphate dikinase regulatory protein, found in Bradyrhizobium diazoefficiens (strain JCM 10833 / BCRC 13528 / IAM 13628 / NBRC 14792 / USDA 110).